The primary structure comprises 303 residues: S-methyl-5'-thioadenosine phosphorylase 1 (303 aa).

Residues Ser14, 57 to 58 (RH), and 90 to 91 (SA) contribute to the phosphate site. A substrate-binding site is contributed by Met198. Position 199 (Ser199) interacts with phosphate. 222–224 (DYD) is a binding site for substrate.

Belongs to the PNP/MTAP phosphorylase family. MTAP subfamily. In terms of assembly, homotrimer.

Its subcellular location is the cytoplasm. It is found in the nucleus. It carries out the reaction S-methyl-5'-thioadenosine + phosphate = 5-(methylsulfanyl)-alpha-D-ribose 1-phosphate + adenine. It participates in amino-acid biosynthesis; L-methionine biosynthesis via salvage pathway; S-methyl-5-thio-alpha-D-ribose 1-phosphate from S-methyl-5'-thioadenosine (phosphorylase route): step 1/1. Functionally, catalyzes the reversible phosphorylation of S-methyl-5'-thioadenosine (MTA) to adenine and 5-methylthioribose-1-phosphate. Involved in the breakdown of MTA, a major by-product of polyamine biosynthesis. Responsible for the first step in the methionine salvage pathway after MTA has been generated from S-adenosylmethionine. Has broad substrate specificity with 6-aminopurine nucleosides as preferred substrates. The sequence is that of S-methyl-5'-thioadenosine phosphorylase 1 from Puccinia graminis f. sp. tritici (strain CRL 75-36-700-3 / race SCCL) (Black stem rust fungus).